The sequence spans 878 residues: MNKDKSKQKPQKKENNNNNNKNNNNNNNKTENNKTNKDFTKNKFDKDAKIDKVDNKKIFHNRSSQKRIAKLKKIELQKKPLTLKLNEIKSIEQRLIDEAPQRGTNPLANISSTTATTTTTTATKNDKEKEKEYKIDYPSATDFKDLPISQLTLKALTESKFLKLTDIQRASLPHTLCGRDILGAAKTGSGKTLSFILPILETLWRNRWGRDDGIGAIVLSPTRELAIQIFDVLKAVGKYHTFSAGLIIGGRNVQQEKDKINAMNILIATPGRLLQHMDETYGFDCSNLKILVLDEADRILDLGFSKCLNSIVENLPRERQTLLFSATQTKSIRDLARLSLQEPEYISVYEKDITTTPQNLTQTLCVIPLEMKLNMLFSFIKTHLTSKIIVFFASCKQVRFAHETFKLLNPGTTLFPLHGKMKQWTRLEVFEDFCKKKAGTLFATDIAARGLDFPAVEWVIQVDCPDDIETYIHRVGRTARNDAPGQSITILLPSEKDGMVNLMEKQKMKFEILEPNPEKLVSIDSKLSSFLSEKTDLKYLAQKSFVSYLRSVYRQSNKEIFKIQELNINEFSKSLGLLGTPNIQFGKASADSKNKSFVVSNIQKQLKDKKSKGEKDIDSSDDDDDDEERNKIGNSDDEDSEDDSDFQDDSDDDNKKVTKQQPKTNIEKLFDRKNANVMSETYQKLRTKEEDEEDDSMFVVKRRDHDLDNLDIVKRLSRKENKEKNFINDPTKLKFQESTSVPKDGKLPTSYIEKVKSEVEKGDVQDKILLKERLKRKKLKLQSKELRKQSGGGATGDDEEESVAYFVPPGEKDPYENGENDSDDESNDDDVWGQEYNSDDDDDDEESESEEQPKPITKKRTLEDHEESALKFLKKNRI.

The segment covering 1-15 has biased composition (basic and acidic residues); the sequence is MNKDKSKQKPQKKEN. 2 disordered regions span residues 1-53 and 102-130; these read MNKD…IDKV and RGTN…KEKE. Over residues 16 to 30 the composition is skewed to low complexity; that stretch reads NNNNNKNNNNNNNKT. Residues 31–53 show a composition bias toward basic and acidic residues; it reads ENNKTNKDFTKNKFDKDAKIDKV. The segment covering 102 to 112 has biased composition (polar residues); the sequence is RGTNPLANISS. Low complexity predominate over residues 113–123; the sequence is TTATTTTTTAT. A Q motif motif is present at residues 141–169; that stretch reads TDFKDLPISQLTLKALTESKFLKLTDIQR. Residues 161–163, Q168, and 185–192 each bind ATP; these read FLK and AKTGSGKT. The 175-residue stretch at 172 to 346 folds into the Helicase ATP-binding domain; it reads LPHTLCGRDI…RLSLQEPEYI (175 aa). Positions 294–297 match the DEAD box motif; it reads DEAD. The region spanning 372-521 is the Helicase C-terminal domain; it reads KLNMLFSFIK…ILEPNPEKLV (150 aa). The span at 608–618 shows a compositional bias: basic and acidic residues; it reads DKKSKGEKDID. Disordered stretches follow at residues 608 to 675 and 781 to 878; these read DKKS…RKNA and LQSK…KNRI. Positions 635 to 652 are enriched in acidic residues; the sequence is SDDEDSEDDSDFQDDSDD. A compositionally biased stretch (basic and acidic residues) spans 665 to 674; the sequence is NIEKLFDRKN. Acidic residues predominate over residues 816–850; sequence ENGENDSDDESNDDDVWGQEYNSDDDDDDEESESE. Residues 860-869 are compositionally biased toward basic and acidic residues; that stretch reads RTLEDHEESA.

This sequence belongs to the DEAD box helicase family. DDX10/DBP4 subfamily.

It localises to the nucleus. The protein resides in the nucleolus. It carries out the reaction ATP + H2O = ADP + phosphate + H(+). Its function is as follows. Probable ATP-dependent RNA helicase which may be involved in ribosome biogenesis. This is Probable ATP-dependent RNA helicase ddx10 (ddx10) from Dictyostelium discoideum (Social amoeba).